Here is a 412-residue protein sequence, read N- to C-terminus: uncharacterized protein (412 aa).

7 consecutive repeat copies span residues 112–116 (GSIRS), 117–121 (GSIRS), 122–126 (GSIRD), 127–131 (GSIRD), 132–136 (GSIRS), 137–141 (GNIRD), and 142–146 (GSVRS). Residues 112-146 (GSIRSGSIRSGSIRDGSIRDGSIRSGNIRDGSVRS) are 7 X 5 AA tandem repeats of G-[NS]-[IV]-R-[DNS]. Residues 116 to 126 (SGSIRSGSIRD) are compositionally biased toward low complexity. The interval 116 to 208 (SGSIRSGSIR…YSEKSIKPST (93 aa)) is disordered. A compositionally biased stretch (basic and acidic residues) spans 192–208 (NHYAESEYSEKSIKPST).

Belongs to the asfivirus B407L family.

This is an uncharacterized protein from Ornithodoros (relapsing fever ticks).